The following is a 240-amino-acid chain: Citrate synthase-lysine N-methyltransferase CSKMT, mitochondrial (240 aa).

The transit peptide at 1-28 directs the protein to the mitochondrion; that stretch reads MAALRRMLHLPSLMMGTCRPFAGSLADS.

Belongs to the methyltransferase superfamily.

The protein resides in the mitochondrion. It carries out the reaction L-lysyl-[citrate synthase] + S-adenosyl-L-methionine = N(6)-methyl-L-lysyl-[citrate synthase] + S-adenosyl-L-homocysteine + H(+). The enzyme catalyses N(6)-methyl-L-lysyl-[citrate synthase] + S-adenosyl-L-methionine = N(6),N(6)-dimethyl-L-lysyl-[citrate synthase] + S-adenosyl-L-homocysteine + H(+). It catalyses the reaction N(6),N(6)-dimethyl-L-lysyl-[citrate synthase] + S-adenosyl-L-methionine = N(6),N(6),N(6)-trimethyl-L-lysyl-[citrate synthase] + S-adenosyl-L-homocysteine + H(+). Citrate synthase-lysine methyltransferase activity is inhibited by S-adenosylhomocysteine (AdoHcy) and oxaloacetate (OAA). Protein-lysine methyltransferase that selectively trimethylates citrate synthase (CS) in mitochondria. Seems to conduct trimethylation in a highly distributive manner rather than in a processive manner, and thus introduces a single methyl group per binding event. This chain is Citrate synthase-lysine N-methyltransferase CSKMT, mitochondrial, found in Homo sapiens (Human).